Consider the following 214-residue polypeptide: Protein DMP6 (214 aa).

Transmembrane regions (helical) follow at residues 52-72, 83-103, 143-163, and 178-198; these read LANL…PICT, FMTA…SFTD, FIDF…VLFD, and VVEL…MVFA.

It belongs to the plant DMP1 protein family. As to expression, expressed constitutively in leaves, stems, flowers, siliques and roots (e.g. root hairs).

The protein localises to the vacuole membrane. Its function is as follows. Involved in membrane remodeling. In Arabidopsis thaliana (Mouse-ear cress), this protein is Protein DMP6.